The primary structure comprises 447 residues: Na(+)-translocating NADH-quinone reductase subunit A (447 aa).

The protein belongs to the NqrA family. In terms of assembly, composed of six subunits; NqrA, NqrB, NqrC, NqrD, NqrE and NqrF.

The enzyme catalyses a ubiquinone + n Na(+)(in) + NADH + H(+) = a ubiquinol + n Na(+)(out) + NAD(+). NQR complex catalyzes the reduction of ubiquinone-1 to ubiquinol by two successive reactions, coupled with the transport of Na(+) ions from the cytoplasm to the periplasm. NqrA to NqrE are probably involved in the second step, the conversion of ubisemiquinone to ubiquinol. The protein is Na(+)-translocating NADH-quinone reductase subunit A of Hahella chejuensis (strain KCTC 2396).